The chain runs to 248 residues: Homeobox protein BarH-like 1 (248 aa).

Positions 135 to 194 (GRRSRTVFTELQLMGLEKRFEKQKYLSTPDRIDLAESLGLSQLQVKTWYQNRRMKWKKIV) form a DNA-binding region, homeobox. The interval 197–248 (GGGLESPTKPKGRPKKNSIPTSEQLSEQERTREADRLSDGGASSLSDANQEE) is disordered. A compositionally biased stretch (basic and acidic residues) spans 223–234 (EQERTREADRLS). The segment covering 237–248 (GASSLSDANQEE) has biased composition (polar residues).

It belongs to the BAR homeobox family.

It localises to the nucleus. Transcription factor, is involved in craniofacial development, and in stomach organogenesis. The chain is Homeobox protein BarH-like 1 (barx1) from Danio rerio (Zebrafish).